The primary structure comprises 152 residues: Venom protein family 1 protein 2 (152 aa).

The N-terminal stretch at 1–21 is a signal peptide; that stretch reads MAKLVFISFLVASFCLIGCFG. The cysteines at positions 70 and 150 are disulfide-linked.

The protein belongs to the insect vpf1 family. As to expression, expressed by the venom gland (posterior main gland) (at protein level).

It localises to the secreted. The sequence is that of Venom protein family 1 protein 2 from Platymeris rhadamanthus (Red spot assassin bug).